The sequence spans 253 residues: E3 ubiquitin-protein ligase MARCHF3 (253 aa).

The RING-CH-type zinc finger occupies 63–123; it reads SPFNDRPMCR…ELCHFRFAVE (61 aa). Zn(2+)-binding residues include cysteine 71, cysteine 74, cysteine 87, cysteine 89, histidine 97, cysteine 100, cysteine 113, and cysteine 116. Helical transmembrane passes span 145–165 and 182–202; these read LFGD…SGWL and AVGL…WTLV. Phosphoserine is present on residues serine 237 and serine 243.

In terms of assembly, interacts with MARCHF2 and STX6.

The protein localises to the cytoplasmic vesicle membrane. Its subcellular location is the early endosome membrane. It carries out the reaction S-ubiquitinyl-[E2 ubiquitin-conjugating enzyme]-L-cysteine + [acceptor protein]-L-lysine = [E2 ubiquitin-conjugating enzyme]-L-cysteine + N(6)-ubiquitinyl-[acceptor protein]-L-lysine.. It functions in the pathway protein modification; protein ubiquitination. Functionally, E3 ubiquitin-protein ligase which may be involved in endosomal trafficking. E3 ubiquitin ligases accept ubiquitin from an E2 ubiquitin-conjugating enzyme in the form of a thioester and then directly transfer the ubiquitin to targeted substrates. The polypeptide is E3 ubiquitin-protein ligase MARCHF3 (MARCHF3) (Bos taurus (Bovine)).